A 1850-amino-acid polypeptide reads, in one-letter code: Serine/threonine-protein kinase WNK (1850 aa).

Disordered regions lie at residues 1-108, 221-253, and 272-309; these read MPDS…NALE, QHSI…NNDK, and MVND…EKAA. Low complexity-rich tracts occupy residues 16 to 26 and 234 to 251; these read SSVSSTTASTT and PPNT…AANN. Residues 284–309 show a composition bias toward basic and acidic residues; it reads DMDKMVSEEERARKEQEKREEEEKAA. The region spanning 334–596 is the Protein kinase domain; that stretch reads LKFDEELGRG…VKQLLVDDFF (263 aa). ATP contacts are provided by residues Ser344, 416–419, and Lys466; that span reads TELM. Residue Asp483 is the Proton acceptor of the active site. Residues 693–749 are a coiled coil; the sequence is DHRLLEIKRAKEEEERIREEAEIKEELRLRAEAKEKEKERLEKERLEKKAAAAAAAN. Positions 727–742 are enriched in basic and acidic residues; sequence EKEKERLEKERLEKKA. 7 disordered regions span residues 727–790, 890–943, 1040–1130, 1188–1249, 1588–1636, 1721–1740, and 1769–1850; these read EKEK…AQQP, TPAS…KRKS, EPPT…AAKP, SPVS…TPAI, GTHI…PSHS, ASLS…DNEG, and IIPS…IENV. Over residues 751 to 760 the composition is skewed to pro residues; that stretch reads NPTPIPPTPA. Polar residues predominate over residues 776-790; it reads STQTSAEIQQSAQQP. Low complexity predominate over residues 890 to 934; it reads TPASIASPSPAPSATDVASTTAPVTPAPTPTTTTDGGAAAASTTT. Basic and acidic residues predominate over residues 1062–1071; sequence PKIEIEKTPP. Polar residues predominate over residues 1077–1101; the sequence is QEPNNVQVTNVRKVSQESNAESVQS. Over residues 1188–1207 the composition is skewed to low complexity; that stretch reads SPVSHSLSSNSSPSATTHSN. The span at 1208–1217 shows a compositional bias: polar residues; sequence MSSIQSTTSV. Over residues 1771–1805 the composition is skewed to low complexity; the sequence is PSSRQSVRSATSSSPSTPPSSSSAPPKSLSSPTKS. Residues 1806–1820 are compositionally biased toward polar residues; that stretch reads YVSHCSLSIGYGSTA. The span at 1821 to 1832 shows a compositional bias: low complexity; it reads SSEQQQREPSPS.

Belongs to the protein kinase superfamily. Ser/Thr protein kinase family. WNK subfamily. Interacts with gck-3 (via C-terminus). Mg(2+) is required as a cofactor. As to expression, expressed in pharynx, nervous system, hypodermis, spermatheca, excretory cell and canal and body wall muscles.

Its subcellular location is the cytoplasm. It catalyses the reaction L-seryl-[protein] + ATP = O-phospho-L-seryl-[protein] + ADP + H(+). The enzyme catalyses L-threonyl-[protein] + ATP = O-phospho-L-threonyl-[protein] + ADP + H(+). Its activity is regulated as follows. Activated in response to hyperosmotic stress: cell shrinkage promotes formation of a membraneless compartment that concentrates wnk-1 with its downstrem substrates. In terms of biological role, serine/threonine-protein kinase component of the WNK3-SPAK/OSR1 kinase cascade, which plays an important role in the regulation of electrolyte homeostasis and regulatory volume increase in response to hyperosmotic stress. Wnk-1 mediates regulatory volume increase in response to hyperosmotic stress by acting as a molecular crowding sensor, which senses cell shrinkage and mediates formation of a membraneless compartment by undergoing liquid-liquid phase separation. The membraneless compartment concentrates wnk-1 with its substrates. Phosphorylates gck-3. Plays a role in osmotic stress responses during which it increases gpdh-1 translation, likely by phosphorylating gck-3. Essential for larval development and the tubular formation of the excretory canals. The protein is Serine/threonine-protein kinase WNK of Caenorhabditis elegans.